The chain runs to 132 residues: Capsid protein (132 aa).

It belongs to the Leviviricetes capsid protein family. As to quaternary structure, homodimer. The capsid protein dimer binds to the viral RNA via an operator hairpin, but also many other RNA sequences in the viral genome.

It localises to the virion. Capsid protein self-assembles to form an icosahedral capsid with a T=3 symmetry, about 26 nm in diameter, and consisting of 89 capsid proteins dimers (178 capsid proteins). Involved in viral genome encapsidation through the interaction between a capsid protein dimer and the multiple packaging signals present in the RNA genome. Binding of the capsid proteins to the viral RNA induces a conformational change required for efficient T=3 shell formation. The capsid also contains 1 copy of the A2 maturation protein. Its function is as follows. Acts as a translational repressor of viral replicase synthesis late in infection. This latter function is the result of capsid protein interaction with an RNA hairpin which contains the replicase ribosome-binding site. The sequence is that of Capsid protein from Enterobacteria phage SP (Bacteriophage SP).